The sequence spans 124 residues: Acidic phospholipase A2 A (124 aa).

Intrachain disulfides connect cysteine 26–cysteine 116, cysteine 28–cysteine 44, cysteine 43–cysteine 95, cysteine 49–cysteine 124, cysteine 50–cysteine 88, cysteine 57–cysteine 81, and cysteine 75–cysteine 86. Positions 27, 29, and 31 each coordinate Ca(2+). Residue histidine 47 is part of the active site. Aspartate 48 provides a ligand contact to Ca(2+). Residue aspartate 89 is part of the active site.

Belongs to the phospholipase A2 family. Group II subfamily. D49 sub-subfamily. It depends on Ca(2+) as a cofactor. In terms of tissue distribution, expressed by the venom gland.

Its subcellular location is the secreted. It carries out the reaction a 1,2-diacyl-sn-glycero-3-phosphocholine + H2O = a 1-acyl-sn-glycero-3-phosphocholine + a fatty acid + H(+). PLA2 catalyzes the calcium-dependent hydrolysis of the 2-acyl groups in 3-sn-phosphoglycerides. In Gloydius halys (Chinese water mocassin), this protein is Acidic phospholipase A2 A.